The following is a 151-amino-acid chain: Large-conductance mechanosensitive channel (151 aa).

2 helical membrane passes run 12-32 (GNIVDLAVAVVIGTAFTALVT) and 71-91 (VLLSAAINFFLIAFAVYFLVV). A disordered region spans residues 122–151 (AQTNGDSPGRHGGRGTPSPTDGPLASTESQ).

Belongs to the MscL family. In terms of assembly, homopentamer.

The protein localises to the cell membrane. Its function is as follows. Channel that opens in response to stretch forces in the membrane lipid bilayer. May participate in the regulation of osmotic pressure changes within the cell. The sequence is that of Large-conductance mechanosensitive channel from Mycobacterium bovis (strain BCG / Pasteur 1173P2).